A 62-amino-acid polypeptide reads, in one-letter code: Large ribosomal subunit protein uL30 (62 aa).

This sequence belongs to the universal ribosomal protein uL30 family. In terms of assembly, part of the 50S ribosomal subunit.

The protein is Large ribosomal subunit protein uL30 of Herpetosiphon aurantiacus (strain ATCC 23779 / DSM 785 / 114-95).